The primary structure comprises 345 residues: NADH-quinone oxidoreductase subunit H (345 aa).

8 helical membrane-spanning segments follow: residues 14-34 (IILA…LFLV), 84-104 (FILA…VIPF), 115-135 (VAIL…IMGG), 161-181 (IGLI…GDIV), 187-207 (GWGF…LFFI), 248-268 (YIAI…GWLS), 277-297 (VLWM…VKAI), and 309-329 (LGWK…AFAA).

This sequence belongs to the complex I subunit 1 family. In terms of assembly, NDH-1 is composed of 14 different subunits. Subunits NuoA, H, J, K, L, M, N constitute the membrane sector of the complex.

The protein localises to the cell inner membrane. The enzyme catalyses a quinone + NADH + 5 H(+)(in) = a quinol + NAD(+) + 4 H(+)(out). Functionally, NDH-1 shuttles electrons from NADH, via FMN and iron-sulfur (Fe-S) centers, to quinones in the respiratory chain. The immediate electron acceptor for the enzyme in this species is believed to be ubiquinone. Couples the redox reaction to proton translocation (for every two electrons transferred, four hydrogen ions are translocated across the cytoplasmic membrane), and thus conserves the redox energy in a proton gradient. This subunit may bind ubiquinone. This Ruegeria pomeroyi (strain ATCC 700808 / DSM 15171 / DSS-3) (Silicibacter pomeroyi) protein is NADH-quinone oxidoreductase subunit H.